The chain runs to 352 residues: Maleylacetate reductase (352 aa).

This sequence belongs to the iron-containing alcohol dehydrogenase family.

The enzyme catalyses 3-oxoadipate + NAD(+) = maleylacetate + NADH + H(+). It catalyses the reaction 3-oxoadipate + NADP(+) = maleylacetate + NADPH + H(+). Its pathway is aromatic compound metabolism; 3-chlorocatechol degradation. This chain is Maleylacetate reductase (tcbF), found in Pseudomonas sp. (strain P51).